Reading from the N-terminus, the 238-residue chain is 1-(5-phosphoribosyl)-5-[(5-phosphoribosylamino)methylideneamino] imidazole-4-carboxamide isomerase (238 aa).

The active-site Proton acceptor is the Asp-8. Asp-129 acts as the Proton donor in catalysis.

The protein belongs to the HisA/HisF family.

It localises to the cytoplasm. It carries out the reaction 1-(5-phospho-beta-D-ribosyl)-5-[(5-phospho-beta-D-ribosylamino)methylideneamino]imidazole-4-carboxamide = 5-[(5-phospho-1-deoxy-D-ribulos-1-ylimino)methylamino]-1-(5-phospho-beta-D-ribosyl)imidazole-4-carboxamide. The protein operates within amino-acid biosynthesis; L-histidine biosynthesis; L-histidine from 5-phospho-alpha-D-ribose 1-diphosphate: step 4/9. The protein is 1-(5-phosphoribosyl)-5-[(5-phosphoribosylamino)methylideneamino] imidazole-4-carboxamide isomerase of Anaeromyxobacter dehalogenans (strain 2CP-C).